We begin with the raw amino-acid sequence, 211 residues long: MRGKQPKRNKDNASVKRNYRCVGYPDCNMSFNRTEHLARHIRKHTGEKPFQCNICLKFFSRIDNLRQHQSSVHSDVDLMSLRRLQQSANSTANDPNATRMFPQLRPYGIVVQPAPVPYNLPISTPASPQDTISLYAPPYFPHPMPSAPIPLPHQPPPLPIYSYMQPLFLNHTPIQNHNIVELPPDSSDTPASPSKVQSFDQAKDASPNAKK.

Residues 6-11 (PKRNKD) carry the Nuclear localization signal motif. 2 consecutive C2H2-type zinc fingers follow at residues 19–44 (YRCV…IRKH) and 50–73 (FQCN…SSVH). Residues 178–211 (NIVELPPDSSDTPASPSKVQSFDQAKDASPNAKK) form a disordered region. Residues 183 to 194 (PPDSSDTPASPS) show a composition bias toward low complexity.

Its subcellular location is the nucleus. The sequence is that of Probable transcription repressor protein RGM1 (RGM1) from Saccharomyces cerevisiae (strain ATCC 204508 / S288c) (Baker's yeast).